The primary structure comprises 263 residues: Probable WRKY transcription factor 62 (263 aa).

Positions 59 to 104 (DHQDDQSNNSSPQDSSPVLESSRKPLHKRGRKTSMAESSDYHRHES) are disordered. Positions 64 to 74 (QSNNSSPQDSS) are enriched in low complexity. Positions 104–174 (SSTPIYHDGF…GQHICQLHQA (71 aa)) form a DNA-binding region, WRKY.

The protein belongs to the WRKY group III family.

The protein localises to the nucleus. Its function is as follows. Transcription factor. Interacts specifically with the W box (5'-(T)TGAC[CT]-3'), a frequently occurring elicitor-responsive cis-acting element. This Arabidopsis thaliana (Mouse-ear cress) protein is Probable WRKY transcription factor 62 (WRKY62).